The sequence spans 397 residues: Purine ribonucleoside efflux pump NepI (397 aa).

Over 1 to 21 the chain is Cytoplasmic; it reads MNENIAEKFRADGVARPNWSA. A helical membrane pass occupies residues 22-42; sequence VFAVAFCVACLITVEFLPVSL. The Periplasmic segment spans residues 43–54; sequence LTPMAQDLGISE. Residues 55–75 traverse the membrane as a helical segment; sequence GVAGQSVTVTAFVAMFSSLFI. The Cytoplasmic portion of the chain corresponds to 76-85; sequence TQIIQATDRR. Residues 86 to 106 traverse the membrane as a helical segment; the sequence is YIVILFAVLLTASCLMVSFAN. Position 107 (Ser-107) is a topological domain, periplasmic. Residues 108–128 form a helical membrane-spanning segment; that stretch reads FTLLLLGRACLGLALGGFWAI. The Cytoplasmic segment spans residues 129 to 147; that stretch reads SASLTMRLVPARTVPKALS. The chain crosses the membrane as a helical span at residues 148–168; the sequence is VIFGAVSIALVIAAPLGSFLG. At 169–175 the chain is on the periplasmic side; it reads GIIGWRN. Residues 176-196 traverse the membrane as a helical segment; that stretch reads VFNAAAVMGVLCVIWVVKSLP. Residues 197–215 are Cytoplasmic-facing; sequence SLPGEPSHQKQNMFSLLQR. Residues 216–236 form a helical membrane-spanning segment; the sequence is PGVMAGMIAIFMSFAGQFAFF. The Periplasmic segment spans residues 237–255; it reads TYIRPVYMNLAGFDVDGLT. A helical membrane pass occupies residues 256–276; it reads LVLLSFGIASFVGTSFSSYVL. Residues 277–281 are Cytoplasmic-facing; sequence KRSVK. Residues 282–302 traverse the membrane as a helical segment; it reads LALAGAPLLLALSALTLIVWG. Residues 303–305 are Periplasmic-facing; sequence SDK. Residues 306–326 traverse the membrane as a helical segment; that stretch reads TVAAAIAIIWGLAFALVPVGW. Topologically, residues 327–343 are cytoplasmic; sequence STWITRSLADQAEKAGS. A helical transmembrane segment spans residues 344–364; that stretch reads IQVAVIQLANTCGAAVGGYAL. Topologically, residues 365-366 are periplasmic; sequence DN. The chain crosses the membrane as a helical span at residues 367-387; the sequence is FGLLSPLALSGGLMLLTALVV. Over 388–397 the chain is Cytoplasmic; sequence AAKVRITPMS.

Belongs to the major facilitator superfamily. DHA1 family. NepI (TC 2.A.1.2.26) subfamily.

The protein resides in the cell inner membrane. It catalyses the reaction inosine(in) + H(+)(out) = inosine(out) + H(+)(in). The catalysed reaction is guanosine(in) + H(+)(out) = guanosine(out) + H(+)(in). Involved in the efflux of purine ribonucleosides, such as inosine and guanosine. The sequence is that of Purine ribonucleoside efflux pump NepI from Salmonella paratyphi A (strain ATCC 9150 / SARB42).